A 1435-amino-acid chain; its full sequence is Guanine nucleotide exchange factor LTE1 (1435 aa).

The N-terminal Ras-GEF domain maps to V25–W157. The tract at residues K235–N256 is disordered. The segment covering Q237–S249 has biased composition (low complexity). Residue S271 is modified to Phosphoserine. The tract at residues Q338 to S365 is disordered. S559 is modified (phosphoserine). Over residues K582–N606 the composition is skewed to basic and acidic residues. A disordered region spans residues K582–S689. A compositionally biased stretch (polar residues) spans S621–L632. Residues S654–S667 show a composition bias toward low complexity. The residue at position 689 (S689) is a Phosphoserine. A Phosphothreonine modification is found at T691. Residues E723 to N744 show a composition bias toward basic and acidic residues. The disordered stretch occupies residues E723 to D747. Residues S808 and S810 each carry the phosphoserine modification. The disordered stretch occupies residues A851–S871. Residues S1028 and S1109 each carry the phosphoserine modification. The Ras-GEF domain maps to D1194–S1434.

Belongs to the LTE1 family. In terms of assembly, interacts with CDC24, CDC42, KEL1, KEL2, RAS2 and TEM1. Post-translationally, phosphorylated by CDC28 in a cell cycle-dependent manner and in response to nocodazole. Dephosphorylion by CDC14 triggers LTE1 release from bud cortex during the exit of mitosis.

The protein localises to the cytoplasm. It is found in the bud. Its function is as follows. GDP-GTP exchange factor for TEM1, a Ras-like protein, component of the mitotic exit network (MEN). Activation of TEM1 by LTE1 in the bud ultimately leads to activation of CDC15 followed by the release of CDC14 from the nucleolus, which then inactivates cyclin-dependent kinases (CDKs) activity by several mechanism. Required for TEM1 localization to the bud cortex during mitotic exit. Fine-tunes the timing of the mitotic exit and couples this event with cytokinesis. Involved in proprotein-processing like proalpha factor-processing in the secretory pathway. This is Guanine nucleotide exchange factor LTE1 (LTE1) from Saccharomyces cerevisiae (strain ATCC 204508 / S288c) (Baker's yeast).